The chain runs to 222 residues: Histidinol-phosphatase (222 aa).

D8 functions as the Nucleophile in the catalytic mechanism. Mg(2+)-binding residues include D8, D10, and D184. Residue D10 is the Proton donor of the active site.

The protein belongs to the HAD-like hydrolase superfamily. SerB family. It depends on Mg(2+) as a cofactor.

The catalysed reaction is L-histidinol phosphate + H2O = L-histidinol + phosphate. The protein operates within amino-acid biosynthesis; L-histidine biosynthesis; L-histidine from 5-phospho-alpha-D-ribose 1-diphosphate: step 8/9. Catalyzes the dephosphorylation of histidinol-phosphate to histidinol, the direct precursor of histidine. The sequence is that of Histidinol-phosphatase from Neisseria meningitidis serogroup C (strain 8013).